A 552-amino-acid chain; its full sequence is MPVAATNSESAMQQVLDNLGSLPNATGAAELDLIFLRGIMESPIVRSLAKAHERLEETKLEAVRDNNLELVQEILRDLAELAEQSSTAAELARILQEPHFQSLLETHDSVASKTYETPPPSPGLDPTFSNQPVPPDAVRMVGIRKTAGEHLGVTFRVEGGELVIARILHGGMVAQQGLLHVGDIIKEVNGQPVGSDPRALQELLRSASGSVILKILPSYQEPHLPRQVFVKCHFDYDPARDSLIPCKEAGLRFNAGDLLQIVNQDDANWWQACHVEGGSAGLIPSQLLEEKRKAFVKRDLELTPTSGTLCGSLSGKKKKRMMYLTTKNAEFDRHELLIYEEVARMPPFRRKTLVLIGAQGVGRRSLKNKLILWDPDRYGTTVPYTSRRPKDSEREGQGYSFVSRGEMEADIRAGRYLEHGEYEGNLYGTRIDSIRGVVASGKVCVLDVNPQAVKVLRTAEFVPYVVFIEAPDFETLRAMNRAALESGVSTKQLTEADLRRTVEESSRIQRGYGHYFDLSLVNSNLERTFRELQTAMEKLRTEPQWVPVSWVY.

L27 domains follow at residues 8 to 59 and 60 to 118; these read SESA…EETK and LEAV…YETP. The residue at position 42 (serine 42) is a Phosphoserine. Residue threonine 117 is modified to Phosphothreonine. Residue serine 121 is modified to Phosphoserine. The PDZ domain occupies 140–219; it reads MVGIRKTAGE…SVILKILPSY (80 aa). An SH3 domain is found at 225–293; the sequence is PRQVFVKCHF…PSQLLEEKRK (69 aa). In terms of domain architecture, Guanylate kinase-like spans 350–537; it reads RKTLVLIGAQ…TFRELQTAME (188 aa).

The protein belongs to the MAGUK family. Can homomultimerise. Interacts with CACNG2. Interacts (via the SH3-Guanylate kinase-like sub-module) with DLG4/PSD95 and DLGAP1/GKAP. Interacts (via the PDZ domain) with CADM1 (via C-terminus). Interacts with KCNN2/SK2 (via N-terminal domain). Interacts with SRC. In terms of processing, phosphorylated by SRC. Expressed in hippocampal neurons.

The protein resides in the cell projection. It is found in the dendrite. Its subcellular location is the postsynaptic density. It localises to the cytoplasm. The protein localises to the cytoskeleton. The protein resides in the membrane. In terms of biological role, postsynaptic MAGUK scaffold protein that links CADM1 cell adhesion molecules to core components of the postsynaptic density. In CA1 pyramidal neurons, required for synaptic KCNN2-containing channel function and long-term potentiation expression. Seems to negatively regulate SRC function in epithelial cells. The chain is MAGUK p55 subfamily member 2 from Rattus norvegicus (Rat).